Reading from the N-terminus, the 119-residue chain is Large ribosomal subunit protein bL20 (119 aa).

Belongs to the bacterial ribosomal protein bL20 family.

In terms of biological role, binds directly to 23S ribosomal RNA and is necessary for the in vitro assembly process of the 50S ribosomal subunit. It is not involved in the protein synthesizing functions of that subunit. The protein is Large ribosomal subunit protein bL20 of Dechloromonas aromatica (strain RCB).